Reading from the N-terminus, the 701-residue chain is Pentatricopeptide repeat-containing protein At5g50390, chloroplastic (701 aa).

The N-terminal 47 residues, Met-1–Ser-47, are a transit peptide targeting the chloroplast. PPR repeat units follow at residues Ser-86–Arg-116, Gly-122–Pro-156, Glu-157–Arg-187, Asn-188–Glu-218, Glu-223–Asp-257, Asn-258–Lys-288, Thr-289–Ile-323, Asp-324–Ser-358, Glu-359–Lys-389, Asn-390–Pro-424, Asn-425–Pro-460, and Arg-461–Lys-491. The type E motif stretch occupies residues Met-496 to Gly-571. The type E(+) motif; degenerate stretch occupies residues Asp-572 to Ser-606. Residues Glu-607–Trp-701 form a type DYW motif region.

It belongs to the PPR family. PCMP-H subfamily.

The protein localises to the plastid. The protein resides in the chloroplast. This chain is Pentatricopeptide repeat-containing protein At5g50390, chloroplastic (PCMP-H58), found in Arabidopsis thaliana (Mouse-ear cress).